The sequence spans 248 residues: 3-deoxy-manno-octulosonate cytidylyltransferase (248 aa).

Belongs to the KdsB family.

It localises to the cytoplasm. It catalyses the reaction 3-deoxy-alpha-D-manno-oct-2-ulosonate + CTP = CMP-3-deoxy-beta-D-manno-octulosonate + diphosphate. Its pathway is nucleotide-sugar biosynthesis; CMP-3-deoxy-D-manno-octulosonate biosynthesis; CMP-3-deoxy-D-manno-octulosonate from 3-deoxy-D-manno-octulosonate and CTP: step 1/1. The protein operates within bacterial outer membrane biogenesis; lipopolysaccharide biosynthesis. Its function is as follows. Activates KDO (a required 8-carbon sugar) for incorporation into bacterial lipopolysaccharide in Gram-negative bacteria. The chain is 3-deoxy-manno-octulosonate cytidylyltransferase from Salmonella typhi.